Reading from the N-terminus, the 432-residue chain is Enolase (432 aa).

Glutamine 167 contacts (2R)-2-phosphoglycerate. The Proton donor role is filled by glutamate 209. Mg(2+)-binding residues include aspartate 246, glutamate 287, and aspartate 314. Lysine 339, arginine 368, serine 369, and lysine 390 together coordinate (2R)-2-phosphoglycerate. The active-site Proton acceptor is lysine 339.

Belongs to the enolase family. It depends on Mg(2+) as a cofactor.

The protein resides in the cytoplasm. It localises to the secreted. The protein localises to the cell surface. The enzyme catalyses (2R)-2-phosphoglycerate = phosphoenolpyruvate + H2O. It functions in the pathway carbohydrate degradation; glycolysis; pyruvate from D-glyceraldehyde 3-phosphate: step 4/5. Its function is as follows. Catalyzes the reversible conversion of 2-phosphoglycerate (2-PG) into phosphoenolpyruvate (PEP). It is essential for the degradation of carbohydrates via glycolysis. The polypeptide is Enolase (Prochlorococcus marinus (strain SARG / CCMP1375 / SS120)).